The primary structure comprises 356 residues: Methionine import ATP-binding protein MetN (356 aa).

The 244-residue stretch at Ile7–Ile250 folds into the ABC transporter domain. Gly43–Ser50 provides a ligand contact to ATP.

The protein belongs to the ABC transporter superfamily. Methionine importer (TC 3.A.1.24) family. In terms of assembly, the complex is composed of two ATP-binding proteins (MetN), two transmembrane proteins (MetI) and a solute-binding protein (MetQ).

It is found in the cell membrane. The catalysed reaction is L-methionine(out) + ATP + H2O = L-methionine(in) + ADP + phosphate + H(+). It carries out the reaction D-methionine(out) + ATP + H2O = D-methionine(in) + ADP + phosphate + H(+). In terms of biological role, part of the ABC transporter complex MetNIQ involved in methionine import. Responsible for energy coupling to the transport system. In Streptococcus agalactiae serotype III (strain NEM316), this protein is Methionine import ATP-binding protein MetN.